The following is a 423-amino-acid chain: Amino sugar nitrososynthase RubN8 (423 aa).

This sequence belongs to the acyl-CoA dehydrogenase family. The cofactor is FAD.

It functions in the pathway antibiotic biosynthesis. Functionally, nitrososynthase involved in the biosynthesis of rubradirin, an ansamycin antibiotic. In vitro, catalyzes the double-oxidation of TDP-L-epi-vancosamine to TDP-L-epi-vancosonitrose. In vivo, probably catalyzes the formation of D-rubranitrose, the nitro sugar moiety of rubradirin. The protein is Amino sugar nitrososynthase RubN8 of Streptomyces rubradiris (Streptomyces achromogenes subsp. rubradiris).